Here is a 196-residue protein sequence, read N- to C-terminus: Early light-induced protein, chloroplastic (196 aa).

The N-terminal 48 residues, 1–48, are a transit peptide targeting the chloroplast; sequence MAVSSCQSIMSNSMTNISSRSRVNQFTNIPSVYIPTLRRNVSLKVRSM. Basic and acidic residues predominate over residues 47 to 57; sequence SMAEGEPKEQS. A disordered region spans residues 47 to 81; sequence SMAEGEPKEQSKVAVDPTTPTASTPTPQPAYTRPP. 3 helical membrane-spanning segments follow: residues 105–125, 132–152, and 176–196; these read LAMI…QGLS, GVAW…IPFF, and IAML…TSLV.

Belongs to the ELIP/psbS family.

It is found in the plastid. The protein localises to the chloroplast membrane. Probably involved in the integration of pigments into the mature pigment-protein complexes. This Pisum sativum (Garden pea) protein is Early light-induced protein, chloroplastic.